A 439-amino-acid polypeptide reads, in one-letter code: Homeobox protein ceh-32 (439 aa).

The homeobox DNA-binding region spans 183 to 243 (WDGEQKTHCF…KNRRQRDRAA (61 aa)). 3 disordered regions span residues 253–293 (GVEL…SHIP), 344–365 (EEEN…KKRS), and 379–439 (VSPS…SQSE). Acidic residues-rich tracts occupy residues 264–274 (SDSDDDFEDSM) and 344–358 (EEEN…EADI). The span at 379–392 (VSPSQCSPCSNESL) shows a compositional bias: polar residues. Basic and acidic residues predominate over residues 398–428 (VKTEEVKKEDDEAAEEDSRSVKSETSEDPKH).

It belongs to the SIX/Sine oculis homeobox family. As to quaternary structure, interacts with gmn-1. As to expression, expressed in the posterior gonad. Expressed in some cells in the head that are probably neurons. Expressed in the dorsal and ventral neuron RMD pair and the inner labial neuron class IL1. Not expressed in BAG neurons.

It is found in the nucleus. In terms of biological role, transcription factor which binds a motif with the core sequence 5'-GTATCA-3'. Plays a role in head morphogenesis. Involved in embryonic development. Required for cell specification of the RIA interneurons. May cooperate with the transcription factor vab-3 and phosphatase eya-1 to repress transcription factor ets-5 expression in non BAG neuronal cells. This chain is Homeobox protein ceh-32, found in Caenorhabditis elegans.